Reading from the N-terminus, the 190-residue chain is LOB domain-containing protein 1 (190 aa).

The span at 1 to 11 (MESKSDASVAT) shows a compositional bias: polar residues. The disordered stretch occupies residues 1–27 (MESKSDASVATTPIISSSSSPPPSLSP). The LOB domain occupies 32 to 133 (SPCAACKILR…AQLAKAQVEM (102 aa)).

This sequence belongs to the LOB domain-containing protein family. Expressed in young shoots, roots, stems, leaves and flowers.

This is LOB domain-containing protein 1 (LBD1) from Arabidopsis thaliana (Mouse-ear cress).